The chain runs to 96 residues: Small ribosomal subunit protein bS6c (96 aa).

Belongs to the bacterial ribosomal protein bS6 family.

The protein localises to the plastid. It is found in the chloroplast. Its function is as follows. Binds together with bS18 to 16S ribosomal RNA. This is Small ribosomal subunit protein bS6c (rps6) from Guillardia theta (Cryptophyte).